The following is a 353-amino-acid chain: Methylthioribose-1-phosphate isomerase (353 aa).

Substrate is bound by residues 51 to 53, arginine 94, and glutamine 203; that span reads RGA. The Proton donor role is filled by aspartate 244. 254–255 is a binding site for substrate; sequence NK.

The protein belongs to the eIF-2B alpha/beta/delta subunits family. MtnA subfamily.

It carries out the reaction 5-(methylsulfanyl)-alpha-D-ribose 1-phosphate = 5-(methylsulfanyl)-D-ribulose 1-phosphate. The protein operates within amino-acid biosynthesis; L-methionine biosynthesis via salvage pathway; L-methionine from S-methyl-5-thio-alpha-D-ribose 1-phosphate: step 1/6. Its function is as follows. Catalyzes the interconversion of methylthioribose-1-phosphate (MTR-1-P) into methylthioribulose-1-phosphate (MTRu-1-P). The polypeptide is Methylthioribose-1-phosphate isomerase (Nostoc punctiforme (strain ATCC 29133 / PCC 73102)).